The primary structure comprises 140 residues: Profilin-2 (140 aa).

Position 2 is an N-acetylalanine (Ala2).

This sequence belongs to the profilin family. As to quaternary structure, occurs in many kinds of cells as a complex with monomeric actin in a 1:1 ratio. Interacts with PFN2. Interacts with ACTMAP (via N-terminus); the interaction may facilitate efficient cleavage of the acetylated N-terminus of immature actin by ACTMAP. Highly expressed in brain, skeletal muscle and kidney and less strongly in heart, placenta, lung and liver.

It is found in the cytoplasm. Its subcellular location is the cytoskeleton. Its function is as follows. Binds to actin and affects the structure of the cytoskeleton. At high concentrations, profilin prevents the polymerization of actin, whereas it enhances it at low concentrations. By binding to PIP2, it inhibits the formation of IP3 and DG. This chain is Profilin-2 (PFN2), found in Homo sapiens (Human).